The following is a 254-amino-acid chain: DNA-3-methyladenine glycosylase (254 aa).

Over residues 1–10 (MKTPARRSKR) the composition is skewed to basic residues. A disordered region spans residues 1–20 (MKTPARRSKRVNQEESETNV).

The protein belongs to the DNA glycosylase MPG family.

The protein resides in the nucleus. It carries out the reaction Hydrolysis of alkylated DNA, releasing 3-methyladenine, 3-methylguanine, 7-methylguanine and 7-methyladenine.. Functionally, hydrolysis of the deoxyribose N-glycosidic bond to excise 3-methyladenine, and 7-methylguanine from the damaged DNA polymer formed by alkylation lesions. The sequence is that of DNA-3-methyladenine glycosylase (MAG) from Arabidopsis thaliana (Mouse-ear cress).